The following is a 151-amino-acid chain: Globin (151 aa).

The Globin domain maps to 2-151 (SLSDADKKAL…AAFNETLKKA (150 aa)). Histidine 100 contributes to the heme b binding site.

The protein belongs to the globin family.

The chain is Globin from Biomphalaria glabrata (Bloodfluke planorb).